The primary structure comprises 397 residues: Lysophospholipid transporter LplT (397 aa).

At 1-17 (MSESVHTNTSLWSKGMK) the chain is on the periplasmic side. Residues 18–38 (AVIVAQFLSAFGDNALLFATL) form a helical membrane-spanning segment. The Cytoplasmic segment spans residues 39-52 (ALLKAQFYPEWSQP). Residues 53-73 (ILQMVFVGAYILFAPFVGQVA) traverse the membrane as a helical segment. Over 74–90 (DSFAKGRVMMFANGLKL) the chain is Periplasmic. A helical transmembrane segment spans residues 91–111 (LGAASICFGINPFLGYTLVGV). At 112–144 (GAAAYSPAKYGILGELTTGSKLVKANGLMEAST) the chain is on the cytoplasmic side. Residues 145-165 (IAAILLGSVAGGVLADWHVLV) form a helical membrane-spanning segment. Ala-166 is a topological domain (periplasmic). A helical transmembrane segment spans residues 167–187 (LAACALAYGGAVVANIYIPKL). Residues 188–226 (AAARPGQSWNLINMTRSFLNACTSLWRNGETRFSLVGTS) lie on the Cytoplasmic side of the membrane. The chain crosses the membrane as a helical span at residues 227–247 (LFWGAGVTLRFLLVLWVPVAL). Over 248-256 (GITDNATPT) the chain is Periplasmic. A helical transmembrane segment spans residues 257–277 (YLNAMVAIGIVVGAGAAAKLV). Residues 278-280 (TLE) lie on the Cytoplasmic side of the membrane. Residues 281-301 (TVSRCMPAGILIGVVVLIFSL) traverse the membrane as a helical segment. The Periplasmic segment spans residues 302–304 (QHE). The helical transmembrane segment at 305-325 (LLPAYALLMLIGVLGGFFVVP) threads the bilayer. The Cytoplasmic portion of the chain corresponds to 326-343 (LNALLQERGKKSVGAGNA). The helical transmembrane segment at 344–364 (IAVQNLGENSAMLLMLGIYSL) threads the bilayer. The Periplasmic segment spans residues 365–366 (AV). The helical transmembrane segment at 367–387 (MVGIPVVPIGIGFGALFALAI) threads the bilayer. Over 388–397 (TALWIWQRRY) the chain is Cytoplasmic.

This sequence belongs to the major facilitator superfamily. LplT (TC 2.A.1.42) family.

Its subcellular location is the cell inner membrane. In terms of biological role, catalyzes the facilitated diffusion of 2-acyl-glycero-3-phosphoethanolamine (2-acyl-GPE) into the cell. The polypeptide is Lysophospholipid transporter LplT (Escherichia coli O127:H6 (strain E2348/69 / EPEC)).